We begin with the raw amino-acid sequence, 132 residues long: uncharacterized protein (132 aa).

Positions 1-35 (MSFEYRHYKREAKICTCRGGWAHVLLCIGVSQGAC) are cleaved as a signal peptide. The disordered stretch occupies residues 91-132 (AHPGSHSDQPPGVPSRRKSRLERWSPSVSRSTSPPTEAPFCL). Low complexity predominate over residues 115–125 (SPSVSRSTSPP).

It is found in the secreted. This is an uncharacterized protein from Homo sapiens (Human).